The sequence spans 465 residues: UDP-N-acetylglucosamine 1-carboxyvinyltransferase (465 aa).

22–23 is a binding site for phosphoenolpyruvate; the sequence is KN. A UDP-N-acetyl-alpha-D-glucosamine-binding site is contributed by Arg94. Catalysis depends on Cys119, which acts as the Proton donor. Cys119 carries the 2-(S-cysteinyl)pyruvic acid O-phosphothioketal modification. UDP-N-acetyl-alpha-D-glucosamine is bound by residues Asp313 and Val335.

It belongs to the EPSP synthase family. MurA subfamily.

It localises to the cytoplasm. The catalysed reaction is phosphoenolpyruvate + UDP-N-acetyl-alpha-D-glucosamine = UDP-N-acetyl-3-O-(1-carboxyvinyl)-alpha-D-glucosamine + phosphate. It participates in cell wall biogenesis; peptidoglycan biosynthesis. Cell wall formation. Adds enolpyruvyl to UDP-N-acetylglucosamine. In Protochlamydia amoebophila (strain UWE25), this protein is UDP-N-acetylglucosamine 1-carboxyvinyltransferase.